Here is a 1002-residue protein sequence, read N- to C-terminus: MDTSMPNQPKFLPRIEHNSSGATANSYVATASGNPFETDEEDEIFSRHKMVLRVPSNCTGDLMHLAVSRNWLVCLLGTPERTTLLRFFLPRAIPPGEAVLEKYLSGSGYKITRMFLDPTGHHIIIALVPKSATAGVSPDFLYIHCLESPQAQQLKVRRIEKFKDHEITAVAFNPYHGNESSTGPILLGTSRGLIFETELNPAADGHVQRKQLYDLGLGRPKYPITGLKLLRVPNSSRYIIVVTSPECIYTFQETLKAEERSLQAIFAGYVSGVQEPHCEERKTDLTFSQLRFFAPPNSKYPKQWAWLCGEGIRVGELSIEANSAATLIGNTLINLDFEKTMHLSYGERRLNTPKAFVLTEYHAVLLYADHVRAICLLNQEQVYQEAFDEARVGKPLSIERDELTGSIYVYTVKTVFNLRVTREERNVWRIYLDKGQYELATAHAAEDPEHLQLVLCQRADAAFADGSYQVAADYYAETDKSFEEVCLKFMVLPDKRPIINYVKKRLSRVTTKPMETDELDEDKMNIIKALVIWLIDLYLIQINMPDKDEEWRSSWQTEYDEFMMEAHVLSCTRQNRETVRQLIAEHADPRNMAQFAIAIGDYDEVVAQQLKAECYAEALQTLINQRNPELFYKYAPELITRLPKPTVDALMAQGSRLEVEKLVPTLIIMENREQREQTQRYLEFAIYKLNTTNDAIHNFLLHLYAEHEPKLLMKYLEIQGRDESLVHYDIYYAHKVCTDLDVKEARVFLECMLRKWISAVDLALTFDMKLAKETASRPSDSKIRRKLWLRIAYHDIKGTNDVKKALNLLKECDLLRIEDLLPFFADFEKIDNFKEAICDALRDYNQRIQELQREMAETTEQTDRVTAELQQLRQHSLTVESQDTCEICEMMLLVKPFFIFICGHKFHSDCLEKHVVPLLTKEQCRRLGTLKQQLEAEVQTQAQPQSGALSKQQAMELQRKRAALKTEIEDILAADCLFCGLLISTIDQPFVDDWEQVNVEWE.

Phosphoserine is present on Ser-344. The stretch at 650–804 (LMAQGSRLEV…DIKGTNDVKK (155 aa)) is one CHCR repeat. Residues 827–880 (FEKIDNFKEAICDALRDYNQRIQELQREMAETTEQTDRVTAELQQLRQHSLTVE) are a coiled coil. The segment at 885-924 (CEICEMMLLVKPFFIFICGHKFHSDCLEKHVVPLLTKEQC) adopts an RING-type; degenerate zinc-finger fold.

Belongs to the VPS18 family. Component of the class C core vacuole/endosome tethering (CORVET) complex composed of at least Vps8, dor/Vps18, car/Vps33A and Vps16A; unlike in other species, Vps11 is not part of the Drosophila complex. Due to the reduced number of components the Drosophila CORVET complex is often referred to as the miniCORVET complex. Interacts with car/Vps33A. Interacts with ema. Component of the homotypic fusion and vacuole protein sorting (HOPS) complex, composed of Vps16A, car/Vps33A, dor/Vps18, Vps39, Vps11 and lt/Vps41. The tethering complex core made up of Vps16A, car/Vps33A and dor/Vps18 and shared by both HOPS and CORVET, preferentially associates with CORVET-specific Vps8 over HOPS-specific lt/Vps41. Interacts with Syx17 (via SNARE domain); the interaction may involve multiple components of the HOPS complex and may promote assembly of the Syx17-Snap29-Vamp7 trans-SNARE complex.

The protein resides in the early endosome. It localises to the late endosome membrane. The protein localises to the lysosome membrane. Its subcellular location is the cytoplasmic vesicle. It is found in the autophagosome. Core component of the class C core vacuole/endosome tethering (CORVET) and the homotypic fusion and vacuole protein sorting (HOPS) tethering complexes involved in endo-lysosomal vesicle trafficking and lysosome biogenesis. The CORVET complex facilitates docking and fusion of endosomal vesicles during endosome maturation, acts upstream of HOPS, but is not involved in autophagic flux. The CORVET complex may cooperate with the early endosomal tether Rbsn-5 to mediate endosomal fusion. The HOPS complex facilitates docking and fusion of lysosomes with late endosomes and several other types of vesicles. The HOPS complex is also involved in autophagy and crinophagy (the elimination of unused secretory granules through their fusion with lysosomes). The HOPS complex mediates autophagocitic flux, probably by binding autophagosome-associated Syx17/syntaxin 17, promoting assembly of the trans-SNARE complex and instigating autophagosome-lysosome fusion. Independent of Syx17/syntaxin 17, HOPS is involved in biosynthetic transport to lysosomes and lysosome-related organelles such as eye-pigment granules. Required for endocytic degradation of boss/bride of sevenless and N/Notch in developing ommatidia. Required for autophagocytosis-dependent remodeling of myofibrils and transverse-tubules (T-tubules) during metamorphosis. In larval neuromuscular junctions, essential for endosomal sorting that traffics old or dysfunctional synaptic vesicle proteins through a degradative endolysosomal route. Required to maintain normal levels of rush, which functions in endosome formation and trafficking. The protein is Vacuolar protein sorting-associated protein 18 homolog of Drosophila melanogaster (Fruit fly).